A 545-amino-acid chain; its full sequence is Membrane protein insertase YidC (545 aa).

Helical transmembrane passes span 10–30 (AVYL…FLFS), 319–339 (LLYF…NVIP), 341–361 (WGLS…PLTF), 407–427 (IGGC…YGLV), 467–487 (ILPF…SNVS), and 502–522 (MPIM…IYWI).

The protein belongs to the OXA1/ALB3/YidC family. Type 1 subfamily. As to quaternary structure, interacts with the Sec translocase complex via SecD. Specifically interacts with transmembrane segments of nascent integral membrane proteins during membrane integration.

It is found in the cell inner membrane. Required for the insertion and/or proper folding and/or complex formation of integral membrane proteins into the membrane. Involved in integration of membrane proteins that insert both dependently and independently of the Sec translocase complex, as well as at least some lipoproteins. Aids folding of multispanning membrane proteins. The sequence is that of Membrane protein insertase YidC from Borrelia recurrentis (strain A1).